The chain runs to 186 residues: Methylamine dehydrogenase light chain (186 aa).

Positions 1-57 form a signal peptide, tat-type signal; that stretch reads MKKNTGFDSGIEKLARKTASKTGRRSFIGKLGGFLVGSALLPLLPVDRRGRMNEAHA. 6 disulfides stabilise this stretch: Cys78/Cys143, Cys84/Cys116, Cys91/Cys176, Cys93/Cys141, Cys101/Cys132, and Cys133/Cys164. A Tryptophylquinone modification is found at Trp112. Positions 112–163 form a cross-link, tryptophan tryptophylquinone (Trp-Trp); the sequence is WVASCFNPGDGQTYLIAYRDCCGKQTCGRCNCVNVQGELPVYRPEFNNDIVW.

The protein belongs to the aromatic amine dehydrogenase light chain family. As to quaternary structure, heterotetramer of two light and two heavy chains. It depends on tryptophan tryptophylquinone residue as a cofactor. In terms of processing, predicted to be exported by the Tat system. The position of the signal peptide cleavage has not been experimentally proven. Tryptophan tryptophylquinone (TTQ) is formed by oxidation of the indole ring of a tryptophan to form tryptophylquinone followed by covalent cross-linking with another tryptophan residue.

It is found in the periplasm. It catalyses the reaction 2 oxidized [amicyanin] + methylamine + H2O = 2 reduced [amicyanin] + formaldehyde + NH4(+) + 2 H(+). The protein operates within one-carbon metabolism; methylamine degradation; formaldehyde from methylamine: step 1/1. Its function is as follows. Methylamine dehydrogenase carries out the oxidation of methylamine. Electrons are passed from methylamine dehydrogenase to amicyanin. This is Methylamine dehydrogenase light chain (mauA) from Methylobacillus flagellatus (strain ATCC 51484 / DSM 6875 / VKM B-1610 / KT).